A 590-amino-acid chain; its full sequence is CTP synthase (590 aa).

Residues 1–278 (MRKHPQSATK…DAFVVRRLNL (278 aa)) form an amidoligase domain region. Residue S20 participates in CTP binding. Position 20 (S20) interacts with UTP. ATP-binding positions include 21–26 (SLGKGL) and D78. D78 and E152 together coordinate Mg(2+). Residues 159–161 (DIE), 199–204 (KTKPTQ), and K235 each bind CTP. UTP contacts are provided by residues 199 to 204 (KTKPTQ) and K235. The Glutamine amidotransferase type-1 domain occupies 303–551 (RIALVGKYVD…VGAAIDYKSA (249 aa)). L-glutamine is bound at residue G366. C393 functions as the Nucleophile; for glutamine hydrolysis in the catalytic mechanism. L-glutamine is bound by residues 394 to 397 (LGLQ), E416, and R477. Active-site residues include H524 and E526. A disordered region spans residues 566–590 (EHLPNSSNQHRDGVERSFPAPAARG).

Belongs to the CTP synthase family. As to quaternary structure, homotetramer.

The enzyme catalyses UTP + L-glutamine + ATP + H2O = CTP + L-glutamate + ADP + phosphate + 2 H(+). It carries out the reaction L-glutamine + H2O = L-glutamate + NH4(+). The catalysed reaction is UTP + NH4(+) + ATP = CTP + ADP + phosphate + 2 H(+). The protein operates within pyrimidine metabolism; CTP biosynthesis via de novo pathway; CTP from UDP: step 2/2. With respect to regulation, allosterically activated by GTP, when glutamine is the substrate; GTP has no effect on the reaction when ammonia is the substrate. The allosteric effector GTP functions by stabilizing the protein conformation that binds the tetrahedral intermediate(s) formed during glutamine hydrolysis. Inhibited by the product CTP, via allosteric rather than competitive inhibition. Functionally, catalyzes the ATP-dependent amination of UTP to CTP with either L-glutamine or ammonia as the source of nitrogen. Regulates intracellular CTP levels through interactions with the four ribonucleotide triphosphates. The protein is CTP synthase of Mycobacterium leprae (strain Br4923).